Here is a 954-residue protein sequence, read N- to C-terminus: MPRKKEQASKSENEKQTSNVQAQDFKTAIQPDTATAQLIKTYSNPKQRGDKGEIVYDGGQSSKLAEVVDQTTEPHNADGAVKDGRIAPVKLDLEKQKLDKLKLFEASPFDPLTVKNNQDVVDKLYATQSSSIQEVVPTKTFATELQFGVTSEDMAKIYGAVVAVSKNVNSSVTYEVKRGTHELIKVPTIPHNLVLIQSDNGKHALIKEDLGQWPVETGVSLVNQAGVFAVQLANKLGIDKPFVLDAGSNYFTDTSFIDTRKYCTDGLSPREIQKALNRQRAYYDRPELTIAENRTLLSQSIVYPDVDGNDVSVIFSGAMSHAIFTYAQSQWSKNIIRLDDYIREITLTVPKHYRPRRFKEIEHTHGYVYRELNQGSLLPLVDANLKEASSYYFKKLMPSISNVPVDARTLQSATSALAADTGLVDRAPHVSMLTNRLTTANASSVRAITVLTCMFKQFRIGMTYSPDPNIMDVAAATCMLLFRPAQSISDEQYRYCLQTMAVFLTNTTYDIVNNDTVDVLKTKLRNQGWPLVERYNAIEVDMSVEPLRSPGQVGRYYNPFNIDPLTKKHVEDRLEEFPNQVQVGRFRNVSNNAVGAALAAFLRACRDKTSANWKGYSILVSRYRSLIPNELFESLRNISGEYNINPQDEHSFFFALAQINADEEFTGVIDKESAEYLDEYATLAREISNSLTLVKAAFGPLERTSGSILNHANNLNKVINRVFADKPLISETMLKILTIDGTTGKDGYRNWLDKLVGHNYPVYVEPVVNIVNFISARFIADSSYFGYTNEIMIMPNHITVPVDDRFGFRDSPFCMSLPRTIMGNEVRRISYSVFSMMEDIDEVISEGFILYDAYFNFTYDIMTTDGVTRLKEDILVVTDTGNDIKPIHFYIYFENKNDKKLRYESKMNVNYRLYIKTPACLLPLNDYMRAQHEYVSPSSSRVYIKDPAVVYTRS.

The segment covering 1–15 has biased composition (basic and acidic residues); it reads MPRKKEQASKSENEK. Positions 1-29 are disordered; it reads MPRKKEQASKSENEKQTSNVQAQDFKTAI. Polar residues predominate over residues 16-29; sequence QTSNVQAQDFKTAI.

The protein resides in the virion. Functionally, self-assembles to form an icosahedral capsid with a pseudo T=2 symmetry, about 60 nm in diameter, and consisting of 120 VP2 subunits. In Banna virus (BAV), this protein is Major inner capsid protein VP2 (Segment-2).